Reading from the N-terminus, the 31-residue chain is Cytochrome b6-f complex subunit 6 (31 aa).

A helical membrane pass occupies residues 3 to 23; the sequence is TLTSYFGFLLVALTITLVLFI.

The protein belongs to the PetL family. In terms of assembly, the 4 large subunits of the cytochrome b6-f complex are cytochrome b6, subunit IV (17 kDa polypeptide, PetD), cytochrome f and the Rieske protein, while the 4 small subunits are PetG, PetL, PetM and PetN. The complex functions as a dimer.

It is found in the plastid. The protein resides in the chloroplast thylakoid membrane. Functionally, component of the cytochrome b6-f complex, which mediates electron transfer between photosystem II (PSII) and photosystem I (PSI), cyclic electron flow around PSI, and state transitions. PetL is important for photoautotrophic growth as well as for electron transfer efficiency and stability of the cytochrome b6-f complex. This chain is Cytochrome b6-f complex subunit 6, found in Populus alba (White poplar).